A 352-amino-acid chain; its full sequence is Peptide chain release factor 1 (352 aa).

Gln233 bears the N5-methylglutamine mark. The tract at residues Asn288–Asn309 is disordered. Residues Ala289 to Arg306 are compositionally biased toward basic and acidic residues.

This sequence belongs to the prokaryotic/mitochondrial release factor family. Methylated by PrmC. Methylation increases the termination efficiency of RF1.

It localises to the cytoplasm. Its function is as follows. Peptide chain release factor 1 directs the termination of translation in response to the peptide chain termination codons UAG and UAA. This is Peptide chain release factor 1 from Helicobacter acinonychis (strain Sheeba).